A 295-amino-acid chain; its full sequence is Methionine aminopeptidase (295 aa).

Residue H62 coordinates substrate. Residues D82, D93, and H153 each contribute to the a divalent metal cation site. Residue H161 participates in substrate binding. A divalent metal cation-binding residues include E187 and E280.

The protein belongs to the peptidase M24A family. Methionine aminopeptidase archaeal type 2 subfamily. As to quaternary structure, monomer. Co(2+) is required as a cofactor. Requires Zn(2+) as cofactor. The cofactor is Mn(2+). It depends on Fe(2+) as a cofactor.

It catalyses the reaction Release of N-terminal amino acids, preferentially methionine, from peptides and arylamides.. Removes the N-terminal methionine from nascent proteins. The N-terminal methionine is often cleaved when the second residue in the primary sequence is small and uncharged (Met-Ala-, Cys, Gly, Pro, Ser, Thr, or Val). This is Methionine aminopeptidase from Pyrococcus abyssi (strain GE5 / Orsay).